The sequence spans 263 residues: 3-deoxy-manno-octulosonate cytidylyltransferase 2 (263 aa).

It belongs to the KdsB family.

It localises to the cytoplasm. The catalysed reaction is 3-deoxy-alpha-D-manno-oct-2-ulosonate + CTP = CMP-3-deoxy-beta-D-manno-octulosonate + diphosphate. Its pathway is nucleotide-sugar biosynthesis; CMP-3-deoxy-D-manno-octulosonate biosynthesis; CMP-3-deoxy-D-manno-octulosonate from 3-deoxy-D-manno-octulosonate and CTP: step 1/1. It functions in the pathway bacterial outer membrane biogenesis; lipopolysaccharide biosynthesis. Activates KDO (a required 8-carbon sugar) for incorporation into bacterial lipopolysaccharide in Gram-negative bacteria. This Paraburkholderia phytofirmans (strain DSM 17436 / LMG 22146 / PsJN) (Burkholderia phytofirmans) protein is 3-deoxy-manno-octulosonate cytidylyltransferase 2.